The chain runs to 251 residues: Small ribosomal subunit protein uS2 (251 aa).

It belongs to the universal ribosomal protein uS2 family.

The sequence is that of Small ribosomal subunit protein uS2 from Synechococcus elongatus (strain ATCC 33912 / PCC 7942 / FACHB-805) (Anacystis nidulans R2).